Reading from the N-terminus, the 86-residue chain is Large ribosomal subunit protein bL31B (86 aa).

This sequence belongs to the bacterial ribosomal protein bL31 family. Type B subfamily. In terms of assembly, part of the 50S ribosomal subunit.

The sequence is that of Large ribosomal subunit protein bL31B from Streptococcus agalactiae serotype III (strain NEM316).